Consider the following 309-residue polypeptide: ATP synthase gamma chain (309 aa).

The protein belongs to the ATPase gamma chain family. In terms of assembly, F-type ATPases have 2 components, CF(1) - the catalytic core - and CF(0) - the membrane proton channel. CF(1) has five subunits: alpha(3), beta(3), gamma(1), delta(1), epsilon(1). CF(0) has three main subunits: a, b and c.

The protein localises to the cell membrane. In terms of biological role, produces ATP from ADP in the presence of a proton gradient across the membrane. The gamma chain is believed to be important in regulating ATPase activity and the flow of protons through the CF(0) complex. This chain is ATP synthase gamma chain, found in Ligilactobacillus salivarius (strain UCC118) (Lactobacillus salivarius).